The following is a 449-amino-acid chain: Probable mitochondrial chaperone bcs1 (449 aa).

At M1 to S20 the chain is on the mitochondrial intermembrane side. The chain crosses the membrane as a helical span at residues G21–L41. The Mitochondrial matrix portion of the chain corresponds to R42–V449. G249–T256 provides a ligand contact to ATP.

The protein belongs to the AAA ATPase family. BCS1 subfamily.

The protein localises to the mitochondrion inner membrane. The enzyme catalyses ATP + H2O = ADP + phosphate + H(+). Functionally, chaperone necessary for the incorporation of Rieske iron-sulfur protein rip1 into the mitochondrial respiratory chain complex III. This Schizosaccharomyces pombe (strain 972 / ATCC 24843) (Fission yeast) protein is Probable mitochondrial chaperone bcs1.